Consider the following 498-residue polypeptide: Putative BTB/POZ domain-containing protein L67 (498 aa).

The BTB domain occupies 26–96 (SDINITLSDN…MYGISLSEIN (71 aa)).

The protein belongs to the mimivirus BTB/WD family.

In Acanthamoeba polyphaga (Amoeba), this protein is Putative BTB/POZ domain-containing protein L67.